A 55-amino-acid chain; its full sequence is ATP synthase F(0) complex subunit 8 (55 aa).

The helical transmembrane segment at 7–24 threads the bilayer; it reads NPWFFIMLLSWLTFSLII. The disordered stretch occupies residues 35–55; it reads NPPSNKTTTHTKTTPWTWPWT. Residues 37–55 are compositionally biased toward low complexity; it reads PSNKTTTHTKTTPWTWPWT.

Belongs to the ATPase protein 8 family. As to quaternary structure, component of the ATP synthase complex composed at least of ATP5F1A/subunit alpha, ATP5F1B/subunit beta, ATP5MC1/subunit c (homooctomer), MT-ATP6/subunit a, MT-ATP8/subunit 8, ATP5ME/subunit e, ATP5MF/subunit f, ATP5MG/subunit g, ATP5MK/subunit k, ATP5MJ/subunit j, ATP5F1C/subunit gamma, ATP5F1D/subunit delta, ATP5F1E/subunit epsilon, ATP5PF/subunit F6, ATP5PB/subunit b, ATP5PD/subunit d, ATP5PO/subunit OSCP. ATP synthase complex consists of a soluble F(1) head domain (subunits alpha(3) and beta(3)) - the catalytic core - and a membrane F(0) domain - the membrane proton channel (subunits c, a, 8, e, f, g, k and j). These two domains are linked by a central stalk (subunits gamma, delta, and epsilon) rotating inside the F1 region and a stationary peripheral stalk (subunits F6, b, d, and OSCP).

It is found in the mitochondrion membrane. Subunit 8, of the mitochondrial membrane ATP synthase complex (F(1)F(0) ATP synthase or Complex V) that produces ATP from ADP in the presence of a proton gradient across the membrane which is generated by electron transport complexes of the respiratory chain. ATP synthase complex consist of a soluble F(1) head domain - the catalytic core - and a membrane F(1) domain - the membrane proton channel. These two domains are linked by a central stalk rotating inside the F(1) region and a stationary peripheral stalk. During catalysis, ATP synthesis in the catalytic domain of F(1) is coupled via a rotary mechanism of the central stalk subunits to proton translocation. In vivo, can only synthesize ATP although its ATP hydrolase activity can be activated artificially in vitro. Part of the complex F(0) domain. This Chaetura pelagica (Chimney swift) protein is ATP synthase F(0) complex subunit 8.